The following is an 89-amino-acid chain: Probable Fe(2+)-trafficking protein (89 aa).

Belongs to the Fe(2+)-trafficking protein family.

Its function is as follows. Could be a mediator in iron transactions between iron acquisition and iron-requiring processes, such as synthesis and/or repair of Fe-S clusters in biosynthetic enzymes. This Acinetobacter baumannii (strain AB0057) protein is Probable Fe(2+)-trafficking protein.